The following is a 355-amino-acid chain: Peptide chain release factor 1 (355 aa).

At glutamine 233 the chain carries N5-methylglutamine.

It belongs to the prokaryotic/mitochondrial release factor family. Post-translationally, methylated by PrmC. Methylation increases the termination efficiency of RF1.

It is found in the cytoplasm. Peptide chain release factor 1 directs the termination of translation in response to the peptide chain termination codons UAG and UAA. The chain is Peptide chain release factor 1 from Desulforudis audaxviator (strain MP104C).